The chain runs to 169 residues: Regulator of G-protein signaling rgs-2 (169 aa).

One can recognise an RGS domain in the interval 39 to 158; sequence GWSQSFENLM…FLASNIYKTV (120 aa).

Post-translationally, may be phosphorylated and activated by egl-4. As to expression, expressed in a subset of neurons including ventral cord and head- and tail-ganglia neurons. Also expressed in non-neuronal cells including pharyngeal and uterine muscles.

Functionally, weakly inhibits G protein signaling in nervous system, interacting preferentially with the G(O) subfamily member goa-1. In vitro, it acts as a GTPase activator of goa-1. Rgs-1 and rgs-2 redundantly adjust signaling when worms are fed to allow rapid induction of egg-laying behavior. Modulates chemotaxis responses by regulating negatively the sensitivity to quinine in ASH sensory neurons. The protein is Regulator of G-protein signaling rgs-2 (rgs-2) of Caenorhabditis elegans.